The sequence spans 408 residues: Peptidase T (408 aa).

Zn(2+) is bound at residue His-81. Asp-83 is an active-site residue. Residue Asp-142 coordinates Zn(2+). Glu-176 serves as the catalytic Proton acceptor. 3 residues coordinate Zn(2+): Glu-177, Asp-199, and His-381.

It belongs to the peptidase M20B family. Zn(2+) is required as a cofactor.

Its subcellular location is the cytoplasm. The catalysed reaction is Release of the N-terminal residue from a tripeptide.. Functionally, cleaves the N-terminal amino acid of tripeptides. This is Peptidase T from Streptococcus gordonii (strain Challis / ATCC 35105 / BCRC 15272 / CH1 / DL1 / V288).